A 66-amino-acid polypeptide reads, in one-letter code: Stress-associated endoplasmic reticulum protein 1 (66 aa).

A disordered region spans residues 1–31 (MVAKQRIRMANEKHSKNITQRGNVAKTSRNA). A compositionally biased stretch (polar residues) spans 17 to 30 (NITQRGNVAKTSRN). A helical transmembrane segment spans residues 39 to 59 (GPWLLALFIFVVCGSAIFQII).

It belongs to the RAMP4 family. Interacts with SEC61B, SEC61A1 and the SEC61 complex. Interacts with CANX.

It localises to the membrane. The protein resides in the endoplasmic reticulum membrane. Its function is as follows. Interacts with target proteins during their translocation into the lumen of the endoplasmic reticulum. Protects unfolded target proteins against degradation during ER stress. May facilitate glycosylation of target proteins after termination of ER stress. May modulate the use of N-glycosylation sites on target proteins. The chain is Stress-associated endoplasmic reticulum protein 1 (SERP1) from Bos taurus (Bovine).